The following is a 1003-amino-acid chain: NACHT, LRR and PYD domains-containing protein 9B (1003 aa).

The 91-residue stretch at 1-91 folds into the Pyrin domain; that stretch reads MAGSSGYGLL…SIMAQKKKRH (91 aa). The NACHT domain maps to 143 to 465; sequence VTAIVAGTTG…QDKDICVPVI (323 aa). Position 149–156 (149–156) interacts with ATP; it reads GTTGEGKT. LRR repeat units follow at residues 749-770, 778-799, 806-826, 835-856, 863-883, 892-913, and 920-940; these read KVKHLSLVENPLKNKGVMSLCE, VLQSLMLSYCCLTFIACGHLYE, HLSLLDLGSNFLEDTGVNLLC, TLKELWLPGCFLTSQCCEEISA, NLKTLKLGNNNIQDTGVRQLC, NLECLGLDLCEFTSDCCKDLAL, and TLNSLNLDWKTLDHSGLVVLC.

As to quaternary structure, sensor component of NLRP9 inflammasomes. Inflammasomes are supramolecular complexes that assemble in the cytosol in response to pathogens, such as rotavirus, but not encephalomyocarditis virus (EMCV), and play critical roles in innate immunity and inflammation. The core of NLRP9 inflammasomes consists of a signal sensor component (NLRP9), an adapter (ASC/PYCARD), which recruits an effector pro-inflammatory caspase (CASP1). Within the complex, NLRP9 and PYCARD interact via their respective DAPIN/pyrin domains. This interaction initiates speck formation (nucleation) which greatly enhances further addition of soluble PYCARD molecules to the speck in a prion-like polymerization process. Clustered PYCARD nucleates the formation of CASP1 filaments through the interaction of their respective CARD domains, acting as a platform for CASP1 polymerization. CASP1 filament formation increases local enzyme concentration, resulting in trans-autocleavage and activation. Active CASP1 then processes IL1B and IL18 precursors, leading to the release of mature cytokines in the extracellular milieu and inflammatory response. Interacts with DHX9 upon rotavirus infection; this interaction may trigger inflammasome activation and inflammatory response. Predominantly expressed in the intestine, including proximal and distal colon, cecum, ileum, jejunum and duodenum (at protein level). In the ileum, expressed in epithelial cells. Also expressed in oocytes at all follicular stages and in preimplantation embryos (at protein level). Although expression decreases in preimplantation embryos, it is still detectable in blastocyts.

Its subcellular location is the cytoplasm. The protein resides in the inflammasome. As the sensor component of the NLRP9 inflammasome, plays a crucial role in innate immunity and inflammation. In response to pathogens, including rotavirus, initiates the formation of the inflammasome polymeric complex, made of NLRP9, PYCARD and CASP1. Recruitment of proCASP1 to the inflammasome promotes its activation and CASP1-catalyzed IL1B and IL18 maturation and release in the extracellular milieu. The active cytokines stimulate inflammatory responses. Inflammasomes can also induce pyroptosis, an inflammatory form of programmed cell death. NLRP9 inflammasome activation may be initiated by DHX9 interaction with viral double-stranded RNA (dsRNA), preferentially to short dsRNA segments. The polypeptide is NACHT, LRR and PYD domains-containing protein 9B (Nlrp9b) (Mus musculus (Mouse)).